A 705-amino-acid chain; its full sequence is MAEEKQLFSTEISGKKFTVEVGELAKQANGACMIHYGDTSVLSVATASSEPKDLPFFPLTVNYEERLYAVGKIPGGFIKREGRPSEKAILSSRLIDRPIRPLFPDGFRNEVQVISTVMSVDQDCPSEIAAMIGSSIALSVSDIPFEQPIAGVNVGRVDGEFIINPTIEQEAKSDIELTVAGTKDAINMVEAGANEVPEDIMLEAIMFGHEEIKRLVAFQEELVKACGQDKFDVVLAESEEELVENVHSEAKDKIVNAIQVQEKHARDEAIKQAKNEIVAHYEEQEVEEDVIKQVKSILDSMVKEEVRRLITKEKIRPDGRKVDEIRPLSSRIHVLPRTHGSGLFTRGQTQALSVCTLGALGDVQILDGLDLEESKRFMHHYNFPQYSVGETGPIRGPGRREIGHGALGERALEKVIPDDKEFPYTIRLVSEVLESNGSTSQASICASTLAMMDAGVPIKAPVAGIAMGLVKSGDDYTILTDIQGMEDALGDMDFKVAGTANGVTALQMDIKIDGLSRDILEEALSQAKKGRMQILDSMLATIKEPKEELSEFAPKILTMAIEPDKIRDVIGPSGKQINQIIDETGVKIDIEQDGSIFISSTDNEMNKKAKQIIEDLVREVEVGQIYLGKVKRIEKFGAFVELFKGKDGLVHISELAEERTNKVEDVVSIDDQIMVKVKEIDRQGRVNLSRKAVIQDEKKAKEQAK.

2 residues coordinate Mg(2+): Asp-487 and Asp-493. The KH domain maps to 554–613 (PKILTMAIEPDKIRDVIGPSGKQINQIIDETGVKIDIEQDGSIFISSTDNEMNKKAKQII). The 69-residue stretch at 623-691 (GQIYLGKVKR…RQGRVNLSRK (69 aa)) folds into the S1 motif domain.

Belongs to the polyribonucleotide nucleotidyltransferase family. It depends on Mg(2+) as a cofactor.

The protein resides in the cytoplasm. The catalysed reaction is RNA(n+1) + phosphate = RNA(n) + a ribonucleoside 5'-diphosphate. In terms of biological role, involved in mRNA degradation. Catalyzes the phosphorolysis of single-stranded polyribonucleotides processively in the 3'- to 5'-direction. In Oceanobacillus iheyensis (strain DSM 14371 / CIP 107618 / JCM 11309 / KCTC 3954 / HTE831), this protein is Polyribonucleotide nucleotidyltransferase.